A 342-amino-acid chain; its full sequence is S-adenosylmethionine:tRNA ribosyltransferase-isomerase (342 aa).

The protein belongs to the QueA family. As to quaternary structure, monomer.

Its subcellular location is the cytoplasm. The catalysed reaction is 7-aminomethyl-7-carbaguanosine(34) in tRNA + S-adenosyl-L-methionine = epoxyqueuosine(34) in tRNA + adenine + L-methionine + 2 H(+). Its pathway is tRNA modification; tRNA-queuosine biosynthesis. Functionally, transfers and isomerizes the ribose moiety from AdoMet to the 7-aminomethyl group of 7-deazaguanine (preQ1-tRNA) to give epoxyqueuosine (oQ-tRNA). The protein is S-adenosylmethionine:tRNA ribosyltransferase-isomerase of Novosphingobium aromaticivorans (strain ATCC 700278 / DSM 12444 / CCUG 56034 / CIP 105152 / NBRC 16084 / F199).